A 170-amino-acid chain; its full sequence is MTRKKRRLILIAACGSVLALAVGLILYAMSGSIVFFRSPTDIAKQAIAPGTRLRLGGLVKDGSLRRGPDQTVDFAVTDTNETVEVHYKGLLPDLFREGQGVVAEGVLEPGGQFRADTVLAKHDESYMPREVADALKAQGRWQEGGPNRGGPAPKPATAAADSTLGPRSER.

Residues 1 to 7 (MTRKKRR) lie on the Cytoplasmic side of the membrane. A helical; Signal-anchor for type II membrane protein transmembrane segment spans residues 8–28 (LILIAACGSVLALAVGLILYA). Over 29–170 (MSGSIVFFRS…DSTLGPRSER (142 aa)) the chain is Periplasmic. Residues histidine 122 and tyrosine 126 each contribute to the heme site. Residues 132–170 (ADALKAQGRWQEGGPNRGGPAPKPATAAADSTLGPRSER) form a disordered region.

It belongs to the CcmE/CycJ family.

Its subcellular location is the cell inner membrane. Its function is as follows. Heme chaperone required for the biogenesis of c-type cytochromes. Transiently binds heme delivered by CcmC and transfers the heme to apo-cytochromes in a process facilitated by CcmF and CcmH. The protein is Cytochrome c-type biogenesis protein CcmE of Methylobacterium radiotolerans (strain ATCC 27329 / DSM 1819 / JCM 2831 / NBRC 15690 / NCIMB 10815 / 0-1).